The following is a 349-amino-acid chain: UPF0324 inner membrane protein YeiH (349 aa).

Residues 1-12 (MTNITLQKQHRT) are Periplasmic-facing. The helical transmembrane segment at 13-32 (LWHFIPGLALSAVITGVALW) threads the bilayer. Residues 33–35 (GGS) lie on the Cytoplasmic side of the membrane. Residues 36 to 58 (IPAVAGAGFSALTLAILLGMVLG) form a helical membrane-spanning segment. Over 59 to 99 (NTIYPHIWKSCDGGVLFAKQYLLRLGIILYGFRLTFSQIAD) the chain is Periplasmic. Residues 100-122 (VGISGIIIDVLTLSSTFLLACFL) form a helical membrane-spanning segment. The Cytoplasmic segment spans residues 123–131 (GQKVFGLDK). A helical transmembrane segment spans residues 132–151 (HTSWLIGAGSSICGAAAVLA). The Periplasmic portion of the chain corresponds to 152–162 (TEPVVKAEASK). Residues 163–185 (VTVAVATVVIFGTVAIFLYPAIY) form a helical membrane-spanning segment. Topologically, residues 186 to 261 (PLMSQWFSPE…SGTNSGEKSK (76 aa)) are cytoplasmic. A helical transmembrane segment spans residues 262–283 (ITIPWFAILFIVVAIFNSFHLL). Residues 284 to 289 (PQSVVN) lie on the Periplasmic side of the membrane. The chain crosses the membrane as a helical span at residues 290–312 (MLVTLDTFLLAMAMAALGLTTHV). Residues 313–321 (SALKKAGAK) lie on the Cytoplasmic side of the membrane. A helical transmembrane segment spans residues 322–344 (PLLMALVLFAWLIVGGGAINYVI). Residues 345–349 (QSVIA) are Periplasmic-facing.

The protein belongs to the UPF0324 family.

It localises to the cell inner membrane. This chain is UPF0324 inner membrane protein YeiH (yeiH), found in Escherichia coli O6:H1 (strain CFT073 / ATCC 700928 / UPEC).